Reading from the N-terminus, the 130-residue chain is Large ribosomal subunit protein bL17 (130 aa).

This sequence belongs to the bacterial ribosomal protein bL17 family. In terms of assembly, part of the 50S ribosomal subunit. Contacts protein L32.

In Nitrosomonas eutropha (strain DSM 101675 / C91 / Nm57), this protein is Large ribosomal subunit protein bL17.